The sequence spans 388 residues: Pepsin A-4 (388 aa).

A signal peptide spans 1–15; sequence MKWLLLLGLVALSEC. The propeptide at 16 to 62 is activation peptide; it reads IMYKVPLIRKKSLRRTLSERGLLKDFLKKHNLNPARKYFPQWEAPTL. Residues 76 to 385 enclose the Peptidase A1 domain; the sequence is YFGTIGIGTP…DRANNQVGLA (310 aa). Aspartate 94 is an active-site residue. A disulfide bond links cysteine 107 and cysteine 112. Residue serine 130 is modified to Phosphoserine. The cysteines at positions 268 and 272 are disulfide-linked. The active site involves aspartate 277. A disulfide bond links cysteine 311 and cysteine 344.

It belongs to the peptidase A1 family.

The protein resides in the secreted. It catalyses the reaction Preferential cleavage: hydrophobic, preferably aromatic, residues in P1 and P1' positions. Cleaves 1-Phe-|-Val-2, 4-Gln-|-His-5, 13-Glu-|-Ala-14, 14-Ala-|-Leu-15, 15-Leu-|-Tyr-16, 16-Tyr-|-Leu-17, 23-Gly-|-Phe-24, 24-Phe-|-Phe-25 and 25-Phe-|-Tyr-26 bonds in the B chain of insulin.. Functionally, shows particularly broad specificity; although bonds involving phenylalanine and leucine are preferred, many others are also cleaved to some extent. This is Pepsin A-4 (PGA4) from Homo sapiens (Human).